The chain runs to 111 residues: Large ribosomal subunit protein uL23 (111 aa).

Belongs to the universal ribosomal protein uL23 family. As to quaternary structure, part of the 50S ribosomal subunit. Contacts protein L29, and trigger factor when it is bound to the ribosome.

In terms of biological role, one of the early assembly proteins it binds 23S rRNA. One of the proteins that surrounds the polypeptide exit tunnel on the outside of the ribosome. Forms the main docking site for trigger factor binding to the ribosome. This is Large ribosomal subunit protein uL23 from Nitrosomonas europaea (strain ATCC 19718 / CIP 103999 / KCTC 2705 / NBRC 14298).